Reading from the N-terminus, the 124-residue chain is UPF0102 protein TM1040_0449 (124 aa).

It belongs to the UPF0102 family.

The sequence is that of UPF0102 protein TM1040_0449 from Ruegeria sp. (strain TM1040) (Silicibacter sp.).